Reading from the N-terminus, the 152-residue chain is Protein SprT-like (152 aa).

In terms of domain architecture, SprT-like spans 7-148 (QRLVEEVSLQ…GKCKGKLNLI (142 aa)). His-67 is a Zn(2+) binding site. Glu-68 is an active-site residue. His-71 is a Zn(2+) binding site.

Belongs to the SprT family. Requires Zn(2+) as cofactor.

The protein resides in the cytoplasm. The polypeptide is Protein SprT-like (Bacillus cereus (strain 03BB102)).